Here is a 270-residue protein sequence, read N- to C-terminus: Cyclase-like protein 3 (270 aa).

The signal sequence occupies residues 1 to 23; it reads MMAHLAPLFLLLLLLLLPLHAAA.

The protein belongs to the Cyclase 1 superfamily. As to expression, highly expressed in leaf sheaths. leaf collars and flag leaves. Expressed in roots, stems, glumes, young panicles and pistils.

Its subcellular location is the secreted. It localises to the extracellular space. The protein localises to the extracellular matrix. May be involved in response to stresses. This is Cyclase-like protein 3 from Oryza sativa subsp. japonica (Rice).